The sequence spans 635 residues: Probable serine/threonine-protein kinase DDB_G0270146 (635 aa).

The Protein kinase domain maps to 77–329; sequence VISDIAIGKG…AKELLSHPWI (253 aa). Residues 83-91 and Lys106 contribute to the ATP site; that span reads IGKGAFATV. Asp199 acts as the Proton acceptor in catalysis. Low complexity predominate over residues 360 to 392; that stretch reads SLLSNSSGGDDSVTDSDLSISNQSSRSSSFLLD. Residues 360-405 are disordered; sequence SLLSNSSGGDDSVTDSDLSISNQSSRSSSFLLDDGGGGGGSKNHTV. 2 coiled-coil regions span residues 417–456 and 536–585; these read IEFN…KYRE and KKAL…KDSS. The segment covering 540–582 has biased composition (basic and acidic residues); the sequence is EAQKRREKEQEKLKEQEKLKEKKKEKDIKKEKDKKDKKDKQLK. Residues 540 to 635 form a disordered region; it reads EAQKRREKEQ…GRSSSKIFNE (96 aa). Over residues 583–598 the composition is skewed to low complexity; the sequence is DSSSSTTTTNSTPSTP. The segment covering 626-635 has biased composition (polar residues); the sequence is GRSSSKIFNE.

This sequence belongs to the protein kinase superfamily. STE Ser/Thr protein kinase family. Mg(2+) is required as a cofactor.

It catalyses the reaction L-seryl-[protein] + ATP = O-phospho-L-seryl-[protein] + ADP + H(+). It carries out the reaction L-threonyl-[protein] + ATP = O-phospho-L-threonyl-[protein] + ADP + H(+). This Dictyostelium discoideum (Social amoeba) protein is Probable serine/threonine-protein kinase DDB_G0270146.